Here is a 161-residue protein sequence, read N- to C-terminus: Nucleotide-binding protein mma_0840 (161 aa).

The protein belongs to the YajQ family.

In terms of biological role, nucleotide-binding protein. The polypeptide is Nucleotide-binding protein mma_0840 (Janthinobacterium sp. (strain Marseille) (Minibacterium massiliensis)).